The chain runs to 269 residues: Formamidopyrimidine-DNA glycosylase (269 aa).

P2 functions as the Schiff-base intermediate with DNA in the catalytic mechanism. E3 (proton donor) is an active-site residue. The active-site Proton donor; for beta-elimination activity is K57. DNA is bound by residues H90, R109, and K150. Residues Q235 to H269 form an FPG-type zinc finger. The Proton donor; for delta-elimination activity role is filled by R259.

Belongs to the FPG family. In terms of assembly, monomer. Zn(2+) serves as cofactor.

It catalyses the reaction Hydrolysis of DNA containing ring-opened 7-methylguanine residues, releasing 2,6-diamino-4-hydroxy-5-(N-methyl)formamidopyrimidine.. The catalysed reaction is 2'-deoxyribonucleotide-(2'-deoxyribose 5'-phosphate)-2'-deoxyribonucleotide-DNA = a 3'-end 2'-deoxyribonucleotide-(2,3-dehydro-2,3-deoxyribose 5'-phosphate)-DNA + a 5'-end 5'-phospho-2'-deoxyribonucleoside-DNA + H(+). Involved in base excision repair of DNA damaged by oxidation or by mutagenic agents. Acts as a DNA glycosylase that recognizes and removes damaged bases. Has a preference for oxidized purines, such as 7,8-dihydro-8-oxoguanine (8-oxoG). Has AP (apurinic/apyrimidinic) lyase activity and introduces nicks in the DNA strand. Cleaves the DNA backbone by beta-delta elimination to generate a single-strand break at the site of the removed base with both 3'- and 5'-phosphates. This chain is Formamidopyrimidine-DNA glycosylase, found in Yersinia enterocolitica serotype O:8 / biotype 1B (strain NCTC 13174 / 8081).